The chain runs to 344 residues: Phosphate acyltransferase (344 aa).

The protein belongs to the PlsX family. As to quaternary structure, homodimer. Probably interacts with PlsY.

It is found in the cytoplasm. It carries out the reaction a fatty acyl-[ACP] + phosphate = an acyl phosphate + holo-[ACP]. It functions in the pathway lipid metabolism; phospholipid metabolism. Functionally, catalyzes the reversible formation of acyl-phosphate (acyl-PO(4)) from acyl-[acyl-carrier-protein] (acyl-ACP). This enzyme utilizes acyl-ACP as fatty acyl donor, but not acyl-CoA. In Yersinia pestis bv. Antiqua (strain Antiqua), this protein is Phosphate acyltransferase.